The primary structure comprises 232 residues: Purine nucleoside phosphorylase DeoD-type (232 aa).

His-4 contacts a purine D-ribonucleoside. Phosphate is bound by residues Gly-20, Arg-24, Arg-43, and Arg-87–Thr-90. A purine D-ribonucleoside is bound by residues Glu-179–Glu-181 and Ser-203–Asp-204. Residue Asp-204 is the Proton donor of the active site.

This sequence belongs to the PNP/UDP phosphorylase family. In terms of assembly, homohexamer; trimer of homodimers.

The catalysed reaction is a purine D-ribonucleoside + phosphate = a purine nucleobase + alpha-D-ribose 1-phosphate. The enzyme catalyses a purine 2'-deoxy-D-ribonucleoside + phosphate = a purine nucleobase + 2-deoxy-alpha-D-ribose 1-phosphate. Catalyzes the reversible phosphorolytic breakdown of the N-glycosidic bond in the beta-(deoxy)ribonucleoside molecules, with the formation of the corresponding free purine bases and pentose-1-phosphate. This is Purine nucleoside phosphorylase DeoD-type from Caldanaerobacter subterraneus subsp. tengcongensis (strain DSM 15242 / JCM 11007 / NBRC 100824 / MB4) (Thermoanaerobacter tengcongensis).